The chain runs to 344 residues: Dihydroorotase (344 aa).

His14 and His16 together coordinate Zn(2+). Substrate is bound by residues 16-18 (HLR) and Asn42. Residues Lys100, His137, and His175 each coordinate Zn(2+). Lys100 carries the N6-carboxylysine modification. His137 provides a ligand contact to substrate. Leu220 lines the substrate pocket. Asp248 is a Zn(2+) binding site. Asp248 is an active-site residue. His252 and Ala264 together coordinate substrate.

This sequence belongs to the metallo-dependent hydrolases superfamily. DHOase family. Class II DHOase subfamily. As to quaternary structure, homodimer. Requires Zn(2+) as cofactor.

It carries out the reaction (S)-dihydroorotate + H2O = N-carbamoyl-L-aspartate + H(+). It functions in the pathway pyrimidine metabolism; UMP biosynthesis via de novo pathway; (S)-dihydroorotate from bicarbonate: step 3/3. Its function is as follows. Catalyzes the reversible cyclization of carbamoyl aspartate to dihydroorotate. The chain is Dihydroorotase from Roseobacter denitrificans (strain ATCC 33942 / OCh 114) (Erythrobacter sp. (strain OCh 114)).